The chain runs to 931 residues: Kinesin heavy chain (931 aa).

The 324-residue stretch at 6-329 (SIKVVARFRP…LRFGMRAKSI (324 aa)) folds into the Kinesin motor domain. Residues 87–94 (GQTGAGKS) and 237–244 (GSEKVGKT) contribute to the ATP site. Residues 342–864 (AELKSLLKKA…VKERLELAKA (523 aa)) adopt a coiled-coil conformation. Disordered stretches follow at residues 388 to 465 (TTDA…EKQL) and 886 to 931 (AKPL…FTKS). Positions 402 to 419 (STRPSTPSLISDSRSETP) are enriched in polar residues. The segment covering 432 to 456 (LDKDEREEFLRRENELQDQISEKES) has biased composition (basic and acidic residues). Positions 902–931 (PTIQNLQGQNEGNTSSGSSSKRASWFFTKS) are enriched in polar residues.

This sequence belongs to the TRAFAC class myosin-kinesin ATPase superfamily. Kinesin family. Kinesin subfamily.

Its subcellular location is the cytoplasm. The protein localises to the cytoskeleton. Its function is as follows. Kinesin is a microtubule-associated force-producing protein that may play a role in organelle transport. Its motor activity is directed toward the microtubule's plus end. In Gibberella moniliformis (Maize ear and stalk rot fungus), this protein is Kinesin heavy chain (KLP1).